The chain runs to 344 residues: Uroporphyrinogen decarboxylase (344 aa).

Residues 26–30 (RQAGR), aspartate 75, tyrosine 150, serine 205, and histidine 323 each bind substrate.

It belongs to the uroporphyrinogen decarboxylase family. Homodimer.

It is found in the cytoplasm. It carries out the reaction uroporphyrinogen III + 4 H(+) = coproporphyrinogen III + 4 CO2. It participates in porphyrin-containing compound metabolism; protoporphyrin-IX biosynthesis; coproporphyrinogen-III from 5-aminolevulinate: step 4/4. Functionally, catalyzes the decarboxylation of four acetate groups of uroporphyrinogen-III to yield coproporphyrinogen-III. The chain is Uroporphyrinogen decarboxylase from Corynebacterium diphtheriae (strain ATCC 700971 / NCTC 13129 / Biotype gravis).